The following is a 412-amino-acid chain: Glutamate-1-semialdehyde 2,1-aminomutase (412 aa).

K260 bears the N6-(pyridoxal phosphate)lysine mark.

It belongs to the class-III pyridoxal-phosphate-dependent aminotransferase family. HemL subfamily. Pyridoxal 5'-phosphate serves as cofactor.

It is found in the cytoplasm. The catalysed reaction is (S)-4-amino-5-oxopentanoate = 5-aminolevulinate. It participates in porphyrin-containing compound metabolism; protoporphyrin-IX biosynthesis; 5-aminolevulinate from L-glutamyl-tRNA(Glu): step 2/2. The sequence is that of Glutamate-1-semialdehyde 2,1-aminomutase from Methanocorpusculum labreanum (strain ATCC 43576 / DSM 4855 / Z).